A 395-amino-acid chain; its full sequence is 8-amino-7-oxononanoate synthase (395 aa).

Arg-24 contacts substrate. 111–112 (GF) contacts pyridoxal 5'-phosphate. His-136 contacts substrate. Pyridoxal 5'-phosphate is bound by residues Ser-184, 209-212 (DDAH), and 240-243 (TLSK). Lys-243 bears the N6-(pyridoxal phosphate)lysine mark. Thr-357 lines the substrate pocket.

The protein belongs to the class-II pyridoxal-phosphate-dependent aminotransferase family. BioF subfamily. As to quaternary structure, homodimer. The cofactor is pyridoxal 5'-phosphate.

The catalysed reaction is 6-carboxyhexanoyl-[ACP] + L-alanine + H(+) = (8S)-8-amino-7-oxononanoate + holo-[ACP] + CO2. Its pathway is cofactor biosynthesis; biotin biosynthesis. Catalyzes the decarboxylative condensation of pimeloyl-[acyl-carrier protein] and L-alanine to produce 8-amino-7-oxononanoate (AON), [acyl-carrier protein], and carbon dioxide. The polypeptide is 8-amino-7-oxononanoate synthase (Alkaliphilus metalliredigens (strain QYMF)).